A 263-amino-acid polypeptide reads, in one-letter code: MNSSRRQEGSPLDLNNLPDEFGKQTVESSTTTAASSAEASRVTKKKSNGGKDEAGKVYECRFCSLKFCKSQALGGHMNRHRQERETETLNRARQLVFGNDSLAAVGAQLNFRDVNMGGGGAAAPPPTMQMGGGGFRGGGVGGDPCIPLRPVQPRLSPPQPPPYHHYLYTTTAPPSALHPMSYPATYPAPPRHQQPAAVGDYVIGHAVSAGDALVAPPPPPHRASFSCFGAPLAAPPANVQPDNGNCNCSFGCGHSNRNVNAAS.

Residues 1-51 form a disordered region; that stretch reads MNSSRRQEGSPLDLNNLPDEFGKQTVESSTTTAASSAEASRVTKKKSNGGK. The segment covering 25 to 40 has biased composition (low complexity); the sequence is TVESSTTTAASSAEAS. A C2H2-type zinc finger spans residues 58 to 80; sequence YECRFCSLKFCKSQALGGHMNRH.

In terms of tissue distribution, expressed in leaf primordia, inflorescence meristem, rachis branch meristems, floral meristem and floral organ primordia.

The protein resides in the nucleus. Functionally, regulates floral organ identity and cell proliferation in the inner floral whorls. Probably specifies the identities of lodicule and stamen through positive regulation of MADS16 expression. May contribute to morphogenesis by suppressing OSH1 expression in the lateral organs. The chain is Zinc finger protein STAMENLESS 1 (SL1) from Oryza sativa subsp. japonica (Rice).